A 152-amino-acid polypeptide reads, in one-letter code: Cell division protein SepF (152 aa).

Belongs to the SepF family. In terms of assembly, homodimer. Interacts with FtsZ.

Its subcellular location is the cytoplasm. Its function is as follows. Cell division protein that is part of the divisome complex and is recruited early to the Z-ring. Probably stimulates Z-ring formation, perhaps through the cross-linking of FtsZ protofilaments. Its function overlaps with FtsA. In Listeria monocytogenes serotype 4b (strain CLIP80459), this protein is Cell division protein SepF.